The following is a 638-amino-acid chain: MAALAGDEAWRCRGCGTYVPLSQRLYRTANEAWHGSCFRCSECQESLTNWYYEKDGKLYCHKDYWAKFGEFCHGCSLLMTGPAMVAGEFKYHPECFACMSCKVIIEDGDAYALVQHATLYCGKCHNEVVLAPMFERLSTESVQDQLPYSVTLISMPATTECRRGFSVTVESASSNYATTVQVKEVNRMHISPNNRNAIHPGDRILEINGTPVRTLRVEEVEDAIKQTSQTLQLLIEHDPVPQRLDQLRLDARLPPHMQSTGHTLMLSTLDTKENQEGTLRRRSLRRSNSISKSPGPSSPKEPLLLSRDISRSESLRCSSSYSQQIFRPCDLIHGEVLGKGFFGQAIKVTHKATGKVMVMKELIRCDEETQKTFLTEVKVMRSLDHPNVLKFIGVLYKDKKLNLLTEYIEGGTLKDFLRSVDPFPWQQKVRFAKGISSGMAYLHSMCIIHRDLNSHNCLIKLDKTVVVADFGLSRLIVEERKRPPVEKATTKKRTLRKSDRKKRYTVVGNPYWMAPEMLNGKSYDETVDVFSFGIVLCEIIGQVYADPDCLPRTLDFGLNVKLFWEKFVPTDCPPAFFPLAAICCKLEPESRPAFSKLEDSFEALSLFLGELAIPLPAELEDLDHTVSMEYGLTRDSPP.

LIM zinc-binding domains lie at 12–63 (CRGC…CHKD) and 72–124 (CHGC…CGKC). A PDZ domain is found at 152–239 (LISMPATTEC…TLQLLIEHDP (88 aa)). T210 is modified (phosphothreonine). The segment at 255–304 (PHMQSTGHTLMLSTLDTKENQEGTLRRRSLRRSNSISKSPGPSSPKEPLL) is disordered. A compositionally biased stretch (polar residues) spans 257–269 (MQSTGHTLMLSTL). Basic and acidic residues predominate over residues 270–279 (DTKENQEGTL). Positions 286 to 304 (RSNSISKSPGPSSPKEPLL) are enriched in low complexity. Phosphoserine is present on residues S293 and S298. Positions 331–608 (LIHGEVLGKG…DSFEALSLFL (278 aa)) constitute a Protein kinase domain. Residues 337–345 (LGKGFFGQA) and K360 contribute to the ATP site. D451 is a catalytic residue. T505 is subject to Phosphothreonine; by ROCK1 and CDC42BP.

The protein belongs to the protein kinase superfamily. TKL Ser/Thr protein kinase family. As to quaternary structure, binds ROCK1 and MARF1. Interacts with NISCH. In terms of processing, phosphorylated on serine and/or threonine residues by ROCK1. As to expression, specifically expressed in the testes.

It localises to the cytoplasm. The protein localises to the cytoskeleton. Its subcellular location is the spindle. The protein resides in the microtubule organizing center. It is found in the centrosome. It localises to the nucleus. The protein localises to the perinuclear region. It catalyses the reaction L-seryl-[protein] + ATP = O-phospho-L-seryl-[protein] + ADP + H(+). The enzyme catalyses L-threonyl-[protein] + ATP = O-phospho-L-threonyl-[protein] + ADP + H(+). In terms of biological role, serine/threonine-protein kinase that plays an essential role in the regulation of actin filament dynamics. Acts downstream of several Rho family GTPase signal transduction pathways. Involved in astral microtubule organization and mitotic spindle orientation during early stages of mitosis by mediating phosphorylation of TPPP. Displays serine/threonine-specific phosphorylation of myelin basic protein and histone (MBP) in vitro. Suppresses ciliogenesis via multiple pathways; phosphorylation of CFL1, suppression of directional trafficking of ciliary vesicles to the ciliary base, and by facilitating YAP1 nuclear localization where it acts as a transcriptional corepressor of the TEAD4 target genes AURKA and PLK1. The protein is LIM domain kinase 2 (Limk2) of Mus musculus (Mouse).